The chain runs to 170 residues: Ubiquitin-conjugating enzyme E2 J2-like (170 aa).

Positions 15 to 165 (DCITRLKREF…NKTFCELFPY (151 aa)) constitute a UBC core domain. Residue C97 is the Glycyl thioester intermediate of the active site.

The protein belongs to the ubiquitin-conjugating enzyme family.

It carries out the reaction S-ubiquitinyl-[E1 ubiquitin-activating enzyme]-L-cysteine + [E2 ubiquitin-conjugating enzyme]-L-cysteine = [E1 ubiquitin-activating enzyme]-L-cysteine + S-ubiquitinyl-[E2 ubiquitin-conjugating enzyme]-L-cysteine.. The protein operates within protein modification; protein ubiquitination. Functionally, catalyzes the covalent attachment of ubiquitin to other proteins. The protein is Ubiquitin-conjugating enzyme E2 J2-like of Dictyostelium discoideum (Social amoeba).